The sequence spans 381 residues: MPPSQTPAQGSGRFLLLSPPSLSSHPEKLNAILGLHARESTDLQMLDRLALGLVSLPESTYDVVLLLTGADNTLAETYRLVSRGVLQGVVNSLKPGGKLRNRDNQIWGSGSDSAAGLGSSDGDGGGGEKMSSSEQAFRNEAILAGLVFDDRGELAKPDFGAQQAVPLKLGRKKNLGESAFGNGAVELPASNGVRVTTGATSSTTTTTTTTAAAAAATAATPTTTTTTTINSSTPSGVGFIDFSDDFGVPMVEETQDSDEELIDEEELLGEYDMGRHIVQPPECRPKAGKRRRACKDCTCGLSQKLEAEDRAKRANADKALETLKLRTNDLAEVDFTVQGKVGSCGNCALGDAFRCDGCPYIGLPAFKPGEEVRLLNNDVQL.

Residues 8 to 165 (AQGSGRFLLL…KPDFGAQQAV (158 aa)) are N-terminal SAM-like domain. The disordered stretch occupies residues 100-134 (RNRDNQIWGSGSDSAAGLGSSDGDGGGGEKMSSSE). Positions 108-118 (GSGSDSAAGLG) are enriched in low complexity. A compositionally biased stretch (gly residues) spans 119–128 (SSDGDGGGGE). Residues 166 to 273 (PLKLGRKKNL…EEELLGEYDM (108 aa)) form a linker region. Residues Cys-283, Cys-294, Cys-297, and Cys-299 each coordinate [2Fe-2S] cluster. Residues 283–299 (CRPKAGKRRRACKDCTC) are fe-S binding site A. Cys-344, Cys-347, Cys-355, and Cys-358 together coordinate [4Fe-4S] cluster. 2 consecutive short sequence motifs (cx2C motif) follow at residues 344 to 347 (CGNC) and 355 to 358 (CDGC). The interval 344 to 358 (CGNCALGDAFRCDGC) is fe-S binding site B.

Belongs to the anamorsin family. Monomer. Interacts with TAH18. Interacts with MIA40. [2Fe-2S] cluster is required as a cofactor. The cofactor is [4Fe-4S] cluster.

It localises to the cytoplasm. The protein resides in the mitochondrion intermembrane space. In terms of biological role, component of the cytosolic iron-sulfur (Fe-S) protein assembly (CIA) machinery required for the maturation of extramitochondrial Fe-S proteins. Part of an electron transfer chain functioning in an early step of cytosolic Fe-S biogenesis, facilitating the de novo assembly of a [4Fe-4S] cluster on the scaffold complex CFD1-NBP35. Electrons are transferred to DRE2 from NADPH via the FAD- and FMN-containing protein TAH18. TAH18-DRE2 are also required for the assembly of the diferric tyrosyl radical cofactor of ribonucleotide reductase (RNR), probably by providing electrons for reduction during radical cofactor maturation in the catalytic small subunit RNR2. This Paracoccidioides brasiliensis (strain Pb18) protein is Fe-S cluster assembly protein DRE2.